A 506-amino-acid polypeptide reads, in one-letter code: D-alanine--D-alanyl carrier protein ligase (506 aa).

152 to 153 (TS) lines the ATP pocket. Asp-197 is a D-alanine binding site. 292-297 (NTYGPT) lines the ATP pocket. D-alanine is bound at residue Val-301. ATP is bound by residues Asp-383, 395–398 (YRGR), and Lys-494. Lys-494 is a D-alanine binding site.

This sequence belongs to the ATP-dependent AMP-binding enzyme family. DltA subfamily.

It is found in the cytoplasm. The catalysed reaction is holo-[D-alanyl-carrier protein] + D-alanine + ATP = D-alanyl-[D-alanyl-carrier protein] + AMP + diphosphate. The protein operates within cell wall biogenesis; lipoteichoic acid biosynthesis. Catalyzes the first step in the D-alanylation of lipoteichoic acid (LTA), the activation of D-alanine and its transfer onto the D-alanyl carrier protein (Dcp) DltC. In an ATP-dependent two-step reaction, forms a high energy D-alanyl-AMP intermediate, followed by transfer of the D-alanyl residue as a thiol ester to the phosphopantheinyl prosthetic group of the Dcp. D-alanylation of LTA plays an important role in modulating the properties of the cell wall in Gram-positive bacteria, influencing the net charge of the cell wall. The protein is D-alanine--D-alanyl carrier protein ligase of Lacticaseibacillus casei (strain BL23) (Lactobacillus casei).